The sequence spans 1537 residues: Adhesion G protein-coupled receptor L3 (1537 aa).

An N-terminal signal peptide occupies residues 1–19 (MWPPQLLILTMLLAPVVHG). At 20-943 (GKHNERHPAL…VKHSDAVHDL (924 aa)) the chain is on the extracellular side. Positions 53–80 (PAAERSTAHRGQGPRGAARGVRGPGAPG) are disordered. The region spanning 103 to 192 (SCESYPIELR…KYLEVQYECV (90 aa)) is the SUEL-type lectin domain. 5 disulfide bridges follow: C104/C134, C113/C191, C146/C178, C159/C165, and C203/C385. N-linked (GlcNAc...) asparagine glycosylation occurs at N161. An Olfactomedin-like domain is found at 202–461 (LCPGLLKGVY…VVKYSLDFGP (260 aa)). Positions 317–347 (YHDTSPYRWGGKSDIDLAVDENGLWVIYATE) are interaction with FLRT3. The Ca(2+) site is built by D332, N380, A381, and V435. Positions 521–540 (RSTTASLPGRRNRSTSTPSP) are disordered. 6 N-linked (GlcNAc...) asparagine glycosylation sites follow: N532, N617, N827, N840, N885, and N911. Positions 756 to 935 (DIVRENTDNI…AVLMAHVEVK (180 aa)) constitute a GAIN-B domain. Cystine bridges form between C886–C917 and C905–C919. Residues 886 to 935 (CSFWSYSKRTMTGYWSTQGCRLLTTNKTHTTCSCNHLTNFAVLMAHVEVK) are GPS. The interval 923-939 (TNFAVLMAHVEVKHSDA) is stachel. The helical transmembrane segment at 944–969 (LLDVITWVGILLSLVCLLICIFTFCF) threads the bilayer. Over 970-975 (FRGLQS) the chain is Cytoplasmic. The chain crosses the membrane as a helical span at residues 976–999 (DRNTIHKNLCISLFVAELLFLIGI). Residue N1000 is glycosylated (N-linked (GlcNAc...) asparagine). Residues 1000–1006 (NRTDQPI) are Extracellular-facing. Residues 1007-1034 (ACAVFAALLHFFFLAAFTWMFLEGVQLY) form a helical membrane-spanning segment. C1008 and C1080 are oxidised to a cystine. The Cytoplasmic segment spans residues 1035–1048 (IMLVEVFESEHSRR). Residues 1049-1071 (KYFYLVGYGMPALIVAVSAAVDY) form a helical membrane-spanning segment. Residues 1072–1086 (RSYGTDKVCWLRLDT) lie on the Extracellular side of the membrane. A helical membrane pass occupies residues 1087–1112 (YFIWSFIGPATLIIMLNVIFLGIALY). At 1113–1142 (KMFHHTAILKPESGCLDNINYEDNRPFIKS) the chain is on the cytoplasmic side. The helical transmembrane segment at 1143–1163 (WVIGAIALLCLLGLTWAFGLM) threads the bilayer. Over 1164-1168 (YINES) the chain is Extracellular. N1166 carries an N-linked (GlcNAc...) asparagine glycan. Residues 1169 to 1195 (TVIMAYLFTIFNSLQGMFIFIFHCVLQ) form a helical membrane-spanning segment. Residues 1196 to 1537 (KKVRKEYGKC…KGPAHLVTSL (342 aa)) are Cytoplasmic-facing. Positions 1213-1237 (GKSTESSIGSGKTSGSRTPGRYSTG) are disordered. 2 positions are modified to phosphoserine: S1254 and S1522. The tract at residues 1512 to 1537 (FIVPPNKDGASPEGTSKGPAHLVTSL) is disordered. The PDZ-binding signature appears at 1532-1537 (HLVTSL).

It belongs to the G-protein coupled receptor 2 family. LN-TM7 subfamily. In terms of assembly, heterodimer of 2 chains generated by proteolytic processing; the large extracellular N-terminal fragment and the membrane-bound C-terminal fragment predominantly remain associated and non-covalently linked. Interacts (via olfactomedin-like domain) with FLRT1 (via extracellular domain). Interacts (via olfactomedin-like domain) with FLRT2 (via extracellular domain). Interacts (via olfactomedin-like domain) with FLRT3 (via extracellular domain); the interaction is direct. Interacts (via extracellular domain) with TENM1. Interacts (via extracellular domain) with TENM2. Interacts (via extracellular domain) with TENM3. Identified in a complex with FLRT3 and UNC5B; does not interact with UNC5B by itself. Identified in a complex with FLRT3 and UNC5D; does not interact with UNC5D by itself. Interacts (via PDZ-binding motif) with SHANK3. Interacts (via PDZ-binding motif) with DLG4. In terms of processing, autoproteolytically processed at the GPS region of the GAIN-B domain; this cleavage modulates receptor activity. O-glycosylated (major) and N-glycosylated. As to expression, localizes to postsynaptic spines in non-overlapping dendritic domains of CA1-region pyramidal neurons: specifically localizes to excitatory synapses in the S.oriens and S.radiatum, corresponding to distinct presynaptic inputs onto CA1-region pyramidal neurons.

Its subcellular location is the cell membrane. It is found in the postsynaptic cell membrane. The protein resides in the cell projection. The protein localises to the axon. It localises to the cell junction. Forms a heterodimer of 2 chains generated by proteolytic processing that remain associated through non-covalent interactions mediated by the GAIN-B domain. In the inactivated receptor, the Stachel sequence (also named stalk) is embedded in the GAIN-B domain, where it adopts a beta-strand conformation. On activation, the Stachel moves into the 7 transmembrane region and adopts a twisted hook-shaped configuration that forms contacts within the receptor, leading to coupling of a G-alpha protein, which activates signaling. The cleaved GAIN-B and N-terminal domains can then dissociate from the rest of the receptor. In terms of biological role, orphan adhesion G-protein coupled receptor (aGPCR), which mediates synapse specificity. Ligand binding causes a conformation change that triggers signaling via guanine nucleotide-binding proteins (G proteins) and modulates the activity of downstream effectors. ADGRL3 is coupled with different classes of G alpha proteins, such as G(12)/G(13), G(s), G(i) or G(q), depending on the context. Coupling to G(12)/G(13) G proteins, which mediates the activation Rho small GTPases is the most efficient. Following G-protein coupled receptor activation, associates with cell adhesion molecules that are expressed at the surface of adjacent cells to direct synapse specificity. Specifically mediates the establishment of Schaffer-collateral synapses formed by CA3-region axons on CA1-region pyramidal neurons in the hippocampus. Localizes to postsynaptic spines in excitatory synapses in the S.oriens and S.radiatum and interacts with presynaptic cell adhesion molecules FLRT3 and TENM2, promoting synapse formation. Plays a role in the development of glutamatergic synapses in the cortex. Important in determining the connectivity rates between the principal neurons in the cortex. Its function is as follows. Orphan adhesion G-protein coupled receptor (aGPCR), which mediates synapse specificity. Ligand binding causes a conformation change that triggers signaling via guanine nucleotide-binding proteins (G proteins) and modulates the activity of downstream effectors, such as adenylate cyclase. Isoform 1 is specifically coupled to G(s) G proteins and mediates activation of adenylate cyclase activity. Following G-protein coupled receptor activation, undergoes liquid-liquid phase transition, associates with (1) cell adhesion molecules that are expressed at the surface of adjacent cells, as well as (2) PDZ-containing proteins, such as SHANK3 and DLG4, in the cytoplasm to direct synapse formation. Functionally, orphan adhesion G-protein coupled receptor (aGPCR). Ligand binding causes a conformation change that triggers signaling via guanine nucleotide-binding proteins (G proteins) and modulates the activity of downstream effectors, such as RhoA pathway. Isoform 7 is coupled to G(12) and/or G(13) G proteins (GNA12 and GNA13, respectively) and mediates the activation Rho small GTPases. The chain is Adhesion G protein-coupled receptor L3 from Mus musculus (Mouse).